The chain runs to 154 residues: uncharacterized protein (154 aa).

The next 4 helical transmembrane spans lie at 39–61 (LLIF…FFAR), 65–87 (LPYI…VSLL), 94–113 (VESL…RVFI), and 128–150 (LLIN…SPFT).

The protein resides in the cell membrane. This is an uncharacterized protein from Aquifex aeolicus (strain VF5).